A 241-amino-acid chain; its full sequence is Probable transcriptional regulatory protein Reut_A2522 (241 aa).

It belongs to the TACO1 family.

The protein resides in the cytoplasm. This Cupriavidus pinatubonensis (strain JMP 134 / LMG 1197) (Cupriavidus necator (strain JMP 134)) protein is Probable transcriptional regulatory protein Reut_A2522.